The primary structure comprises 1221 residues: Coatomer subunit alpha (1221 aa).

WD repeat units lie at residues 7–46, 49–88, 91–130, 133–172, 202–241, 243–282, 285–323, 358–399, and 528–567; these read TKAS…LLEK, EHEG…CLFT, GHKD…CIAE, GHNH…KKMT, GHDR…VDTF, GHYN…TVHM, RDHD…PLFV, PSNN…SNTV, and WDDN…TGVK. The interval 820 to 885 is disordered; sequence GVEQSTSTPT…DDGGWERDDL (66 aa). The segment covering 844-857 has biased composition (low complexity); the sequence is SQQQSSQQQQQQQQ. A WD 10 repeat occupies 910 to 953; it reads PQPGPSFSMIWARNSQFAVDHIAAGSFESAMNILNSQIGAVNFD.

Oligomeric complex that consists of at least the alpha, beta, beta', gamma, delta, epsilon and zeta subunits.

The protein localises to the cytoplasm. It is found in the golgi apparatus membrane. Functionally, the coatomer is a cytosolic protein complex that binds to dilysine motifs and reversibly associates with Golgi non-clathrin-coated vesicles, which further mediate biosynthetic protein transport from the ER, via the Golgi up to the trans Golgi network. Coatomer complex is required for budding from Golgi membranes, and is essential for the retrograde Golgi-to-ER transport of dilysine-tagged proteins. This Dictyostelium discoideum (Social amoeba) protein is Coatomer subunit alpha (copa).